The chain runs to 123 residues: Large ribosomal subunit protein bL12 (123 aa).

This sequence belongs to the bacterial ribosomal protein bL12 family. Homodimer. Part of the ribosomal stalk of the 50S ribosomal subunit. Forms a multimeric L10(L12)X complex, where L10 forms an elongated spine to which 2 to 4 L12 dimers bind in a sequential fashion. Binds GTP-bound translation factors.

Its function is as follows. Forms part of the ribosomal stalk which helps the ribosome interact with GTP-bound translation factors. Is thus essential for accurate translation. The polypeptide is Large ribosomal subunit protein bL12 (Pseudoalteromonas atlantica (strain T6c / ATCC BAA-1087)).